Reading from the N-terminus, the 461-residue chain is Bifunctional protein GlmU (461 aa).

The pyrophosphorylase stretch occupies residues 1 to 227 (MEVIALILAA…PDEVLGVNDR (227 aa)). UDP-N-acetyl-alpha-D-glucosamine contacts are provided by residues 8 to 11 (LAAG), lysine 22, glutamine 73, 78 to 79 (GT), 100 to 102 (YGD), glycine 137, glutamate 152, asparagine 167, and asparagine 225. Aspartate 102 is a Mg(2+) binding site. Position 225 (asparagine 225) interacts with Mg(2+). The segment at 228 to 248 (RQLAELERIYQVHQARALMER) is linker. The tract at residues 249-461 (GVTLRDPARF…EKARKESCAE (213 aa)) is N-acetyltransferase. Positions 332 and 350 each coordinate UDP-N-acetyl-alpha-D-glucosamine. Catalysis depends on histidine 362, which acts as the Proton acceptor. 2 residues coordinate UDP-N-acetyl-alpha-D-glucosamine: tyrosine 365 and asparagine 376. Acetyl-CoA is bound by residues alanine 379, 385 to 386 (NY), serine 404, alanine 422, and arginine 439.

In the N-terminal section; belongs to the N-acetylglucosamine-1-phosphate uridyltransferase family. It in the C-terminal section; belongs to the transferase hexapeptide repeat family. As to quaternary structure, homotrimer. Requires Mg(2+) as cofactor.

The protein localises to the cytoplasm. The enzyme catalyses alpha-D-glucosamine 1-phosphate + acetyl-CoA = N-acetyl-alpha-D-glucosamine 1-phosphate + CoA + H(+). The catalysed reaction is N-acetyl-alpha-D-glucosamine 1-phosphate + UTP + H(+) = UDP-N-acetyl-alpha-D-glucosamine + diphosphate. It functions in the pathway nucleotide-sugar biosynthesis; UDP-N-acetyl-alpha-D-glucosamine biosynthesis; N-acetyl-alpha-D-glucosamine 1-phosphate from alpha-D-glucosamine 6-phosphate (route II): step 2/2. The protein operates within nucleotide-sugar biosynthesis; UDP-N-acetyl-alpha-D-glucosamine biosynthesis; UDP-N-acetyl-alpha-D-glucosamine from N-acetyl-alpha-D-glucosamine 1-phosphate: step 1/1. It participates in bacterial outer membrane biogenesis; LPS lipid A biosynthesis. In terms of biological role, catalyzes the last two sequential reactions in the de novo biosynthetic pathway for UDP-N-acetylglucosamine (UDP-GlcNAc). The C-terminal domain catalyzes the transfer of acetyl group from acetyl coenzyme A to glucosamine-1-phosphate (GlcN-1-P) to produce N-acetylglucosamine-1-phosphate (GlcNAc-1-P), which is converted into UDP-GlcNAc by the transfer of uridine 5-monophosphate (from uridine 5-triphosphate), a reaction catalyzed by the N-terminal domain. This chain is Bifunctional protein GlmU, found in Methylococcus capsulatus (strain ATCC 33009 / NCIMB 11132 / Bath).